We begin with the raw amino-acid sequence, 217 residues long: Cytokinin riboside 5'-monophosphate phosphoribohydrolase LOG7 (217 aa).

Residues E79, 97–98 (RK), 114–120 (GYGTLEE), and T126 contribute to the substrate site.

It belongs to the LOG family. As to expression, expressed in roots and shoots. Detected in the epidermis of the root elongation zone, cotyledon and leaves, in trichomes and pollen.

It is found in the cytoplasm. It localises to the nucleus. The catalysed reaction is N(6)-(dimethylallyl)adenosine 5'-phosphate + H2O = N(6)-dimethylallyladenine + D-ribose 5-phosphate. It carries out the reaction 9-ribosyl-trans-zeatin 5'-phosphate + H2O = trans-zeatin + D-ribose 5-phosphate. Functionally, cytokinin-activating enzyme working in the direct activation pathway. Phosphoribohydrolase that converts inactive cytokinin nucleotides to the biologically active free-base forms. In Arabidopsis thaliana (Mouse-ear cress), this protein is Cytokinin riboside 5'-monophosphate phosphoribohydrolase LOG7 (LOG7).